The following is a 465-amino-acid chain: Coumaroyl-CoA:anthocyanidin 3-O-glucoside-6''-O-coumaroyltransferase 2 (465 aa).

N-acetylmethionine is present on Met1. Active-site proton acceptor residues include His173 and Asp406.

It belongs to the plant acyltransferase family. In terms of tissue distribution, highly expressed in flowers, and leaves. Lower levels of expression in stems, roots and siliques.

Its function is as follows. Involved in the acylation of the 6'' position of the 3-O-glucose residue of anthocyanin. Also able to use flavonol 3-glucosides as the acyl acceptor. This chain is Coumaroyl-CoA:anthocyanidin 3-O-glucoside-6''-O-coumaroyltransferase 2 (3AT2), found in Arabidopsis thaliana (Mouse-ear cress).